Consider the following 772-residue polypeptide: NAD(P)H-quinone oxidoreductase subunit 5, chloroplastic (772 aa).

16 helical membrane passes run 9 to 29 (WIIP…LLLF), 40 to 60 (WSFP…YLSI), 89 to 109 (IDPL…LVLF), 125 to 145 (FAYL…SNLI), 147 to 167 (IYIF…FWFT), 185 to 205 (GDFG…SFEF), 220 to 240 (NQVH…GAVA), 259 to 279 (TPIS…FLVA), 290 to 312 (YIMN…LALA), 328 to 348 (LGYM…FHLI), 355 to 375 (ALLF…VGYS), 397 to 417 (TAFL…CFWS), 426 to 446 (WLYS…TAFY), 550 to 570 (LFSL…GIPF), 604 to 624 (FVTN…IATF), and 731 to 751 (IFIF…FFVL).

This sequence belongs to the complex I subunit 5 family. NDH is composed of at least 16 different subunits, 5 of which are encoded in the nucleus.

Its subcellular location is the plastid. The protein resides in the chloroplast thylakoid membrane. It catalyses the reaction a plastoquinone + NADH + (n+1) H(+)(in) = a plastoquinol + NAD(+) + n H(+)(out). It carries out the reaction a plastoquinone + NADPH + (n+1) H(+)(in) = a plastoquinol + NADP(+) + n H(+)(out). NDH shuttles electrons from NAD(P)H:plastoquinone, via FMN and iron-sulfur (Fe-S) centers, to quinones in the photosynthetic chain and possibly in a chloroplast respiratory chain. The immediate electron acceptor for the enzyme in this species is believed to be plastoquinone. Couples the redox reaction to proton translocation, and thus conserves the redox energy in a proton gradient. The sequence is that of NAD(P)H-quinone oxidoreductase subunit 5, chloroplastic (ndhF) from Oenothera argillicola (Appalachian evening primrose).